Here is a 93-residue protein sequence, read N- to C-terminus: Small ribosomal subunit protein uS19 (93 aa).

This sequence belongs to the universal ribosomal protein uS19 family.

Functionally, protein S19 forms a complex with S13 that binds strongly to the 16S ribosomal RNA. The polypeptide is Small ribosomal subunit protein uS19 (Clavibacter michiganensis subsp. michiganensis (strain NCPPB 382)).